The sequence spans 899 residues: UPF0182 protein Mhun_1303 (899 aa).

A run of 7 helical transmembrane segments spans residues 6–26 (LLIFIPAAVILLFFLLTDLLS), 39–59 (VFLTILITSAALFVIGTLLFF), 93–113 (VAAGITGLSLSSSWEIILAFL), 136–156 (LPFYTILIQYLLALFVFTLII), 196–216 (FLPQVNCLLFLIFTTLAAFLW), 240–260 (ITIPALTILTVIAFLIGLLFL), and 271–291 (IAYGIGGFFIIAILSAGAGFL).

This sequence belongs to the UPF0182 family.

It localises to the cell membrane. The polypeptide is UPF0182 protein Mhun_1303 (Methanospirillum hungatei JF-1 (strain ATCC 27890 / DSM 864 / NBRC 100397 / JF-1)).